The sequence spans 358 residues: MSAFVSKYEDELIKTAKYIATPGRGILAADESTETIGKRFAGINVENTESNRQAYRELLFTSPGSYPCLSGVILFEETLYQKTSDGKPFVDLLMENGVIPGIKVDKGLVDLAGTNGETTTQGLDSLGARCQQYYEAGARFAKWRAFFKIGATEPSVLSIQEDARVLARYAIICQENGLVPIVEPEVLTGGSHDIKKCAAVTETVLAAVFKALNYHHVLLEGTLLKPNMVTPGSDSPKVAPELIAEYTVTALRRTVPPAIPGIVFLSGIQREEQATLNLNAMNKLDVLKPWTLTFSFGGALQQSAIKAWAGKPENVAKAQAKFLTRCKANKDATLGKYTGWASGDSAAFENLVVIGYRY.

N-acetylserine is present on S2. Position 52 (R52) interacts with substrate. S-glutathionyl cysteine; transient is present on C68. Residue K142 coordinates substrate. C173 is subject to S-glutathionyl cysteine; transient; alternate. S-nitrosocysteine; transient; alternate is present on C173. The active-site Proton acceptor is the E183. The active-site Schiff-base intermediate with dihydroxyacetone-P is K225. Residue 266 to 268 (SGI) participates in substrate binding.

Belongs to the class I fructose-bisphosphate aldolase family. Homotetramer. Post-translationally, S-glutathionylated at Cys-68 and Cys-173. S-nitrosylated at Cys-173. As to expression, highly expressed in flowers, and at lower levels in rosettes leaves and cauline leaves.

The protein resides in the cytoplasm. Its subcellular location is the cytosol. The catalysed reaction is beta-D-fructose 1,6-bisphosphate = D-glyceraldehyde 3-phosphate + dihydroxyacetone phosphate. It functions in the pathway carbohydrate degradation; glycolysis; D-glyceraldehyde 3-phosphate and glycerone phosphate from D-glucose: step 4/4. Its function is as follows. Plays a key role in glycolysis and gluconeogenesis. The chain is Fructose-bisphosphate aldolase 7, cytosolic from Arabidopsis thaliana (Mouse-ear cress).